Here is a 273-residue protein sequence, read N- to C-terminus: Major prion protein homolog (273 aa).

The signal sequence occupies residues 1 to 24 (MARLLTTCCLLALLLAACTDVALS). The interval 25 to 121 (KKGKGKPSGG…QKPWKPPKTN (97 aa)) is disordered. Repeat copies occupy residues 42 to 47 (RQPSYP), 48 to 53 (RQPGYP), 54 to 59 (HNPGYP), 60 to 65 (HNPGYP), 66 to 71 (HNPGYP), 72 to 77 (HNPGYP), 78 to 83 (HNPGYP), and 84 to 89 (QNPGYP). The 8 X 6 AA tandem repeats of [HR]-[NQ]-P-G-Y-P stretch occupies residues 42 to 89 (RQPSYPRQPGYPHNPGYPHNPGYPHNPGYPHNPGYPHNPGYPQNPGYP). A compositionally biased stretch (low complexity) spans 51 to 94 (GYPHNPGYPHNPGYPHNPGYPHNPGYPHNPGYPQNPGYPHNPGY). Cu(2+)-binding residues include His66, His72, and His78. Residues His90 and Gly93 each coordinate Cu(2+). Residues 101–111 (YNPSSGGSYHN) show a composition bias toward polar residues. The cysteines at positions 192 and 237 are disulfide-linked. N-linked (GlcNAc...) asparagine glycans are attached at residues Asn194, Asn209, and Asn218. Residue Ser248 is the site of GPI-anchor amidated serine attachment. Positions 249 to 273 (GIQLHPADTWLAVLLLLLTTLFAMH) are cleaved as a propeptide — removed in mature form.

It belongs to the prion family. As to quaternary structure, monomer and homodimer. Has a tendency to aggregate into amyloid fibrils containing a cross-beta spine, formed by a steric zipper of superposed beta-strands. Soluble oligomers may represent an intermediate stage on the path to fibril formation. Copper binding may promote oligomerization. In terms of tissue distribution, spinal cord and brain.

It localises to the cell membrane. Its function is as follows. Its primary physiological function is unclear. Has cytoprotective activity against internal or environmental stresses. May play a role in neuronal development and synaptic plasticity. May be required for neuronal myelin sheath maintenance. May play a role in iron uptake and iron homeostasis. Soluble oligomers are toxic to cultured neuroblastoma cells and induce apoptosis (in vitro). Association with GPC1 (via its heparan sulfate chains) targets PRNP to lipid rafts. Also provides Cu(2+) or Zn(2+) for the ascorbate-mediated GPC1 deaminase degradation of its heparan sulfate side chains. The polypeptide is Major prion protein homolog (PRNP) (Gallus gallus (Chicken)).